The chain runs to 539 residues: DnaJ homolog subfamily C member 7 homolog (539 aa).

6 TPR repeats span residues 3–36 (HEEC…SNGT), 75–108 (IKGY…DPRN), 189–222 (PEYL…DPDY), 235–268 (IESK…DPKL), 273–306 (SQLY…DPNY), and 307–340 (GKAY…DPEN). Residues 361–431 (DYYKILGVSK…KKKRQYDMGQ (71 aa)) form the J domain. Residues 512–539 (MGGGFGGHSGHSHGGSRSRSSRGGNEYR) are disordered. Over residues 521–531 (GHSHGGSRSRS) the composition is skewed to basic residues.

This chain is DnaJ homolog subfamily C member 7 homolog (dnajc7), found in Dictyostelium discoideum (Social amoeba).